A 1380-amino-acid chain; its full sequence is DNA-directed RNA polymerase subunit beta (1380 aa).

The protein belongs to the RNA polymerase beta chain family. As to quaternary structure, the RNAP catalytic core consists of 2 alpha, 1 beta, 1 beta' and 1 omega subunit. When a sigma factor is associated with the core the holoenzyme is formed, which can initiate transcription.

The catalysed reaction is RNA(n) + a ribonucleoside 5'-triphosphate = RNA(n+1) + diphosphate. In terms of biological role, DNA-dependent RNA polymerase catalyzes the transcription of DNA into RNA using the four ribonucleoside triphosphates as substrates. This Ehrlichia ruminantium (strain Welgevonden) protein is DNA-directed RNA polymerase subunit beta.